The sequence spans 341 residues: L-threonine 3-dehydrogenase (341 aa).

Cysteine 38 provides a ligand contact to Zn(2+). Active-site charge relay system residues include threonine 40 and histidine 43. Positions 63, 64, 93, 96, 99, and 107 each coordinate Zn(2+). NAD(+) contacts are provided by residues isoleucine 175, aspartate 195, arginine 200, 262–264 (LGI), and 286–287 (IY).

It belongs to the zinc-containing alcohol dehydrogenase family. As to quaternary structure, homotetramer. It depends on Zn(2+) as a cofactor.

The protein resides in the cytoplasm. It carries out the reaction L-threonine + NAD(+) = (2S)-2-amino-3-oxobutanoate + NADH + H(+). The protein operates within amino-acid degradation; L-threonine degradation via oxydo-reductase pathway; glycine from L-threonine: step 1/2. Catalyzes the NAD(+)-dependent oxidation of L-threonine to 2-amino-3-ketobutyrate. The chain is L-threonine 3-dehydrogenase from Photorhabdus laumondii subsp. laumondii (strain DSM 15139 / CIP 105565 / TT01) (Photorhabdus luminescens subsp. laumondii).